Consider the following 824-residue polypeptide: Glycogen phosphorylase (824 aa).

Position 667 is an N6-(pyridoxal phosphate)lysine (lysine 667).

Belongs to the glycogen phosphorylase family. The cofactor is pyridoxal 5'-phosphate.

It catalyses the reaction [(1-&gt;4)-alpha-D-glucosyl](n) + phosphate = [(1-&gt;4)-alpha-D-glucosyl](n-1) + alpha-D-glucose 1-phosphate. In terms of biological role, phosphorylase is an important allosteric enzyme in carbohydrate metabolism. Enzymes from different sources differ in their regulatory mechanisms and in their natural substrates. However, all known phosphorylases share catalytic and structural properties. This is Glycogen phosphorylase (glgP) from Chlamydia pneumoniae (Chlamydophila pneumoniae).